Reading from the N-terminus, the 275-residue chain is Cis-2,3-dihydrobiphenyl-2,3-diol dehydrogenase (275 aa).

9–33 (LITGGASGLGRALVDRFVAEAKVAV) is an NAD(+) binding site. S140 is a substrate binding site. The Proton acceptor role is filled by Y153.

This sequence belongs to the short-chain dehydrogenases/reductases (SDR) family.

It carries out the reaction (2R,3S)-3-phenylcyclohexa-3,5-diene-1,2-diol + NAD(+) = biphenyl-2,3-diol + NADH + H(+). The protein operates within xenobiotic degradation; biphenyl degradation; 2-hydroxy-2,4-pentadienoate and benzoate from biphenyl: step 2/4. This chain is Cis-2,3-dihydrobiphenyl-2,3-diol dehydrogenase (bphB), found in Metapseudomonas furukawaii (Pseudomonas furukawaii).